Consider the following 307-residue polypeptide: D-alanine--D-alanine ligase (307 aa).

An ATP-grasp domain is found at 104–301 (RTAFLAAGLP…FVSLCRWMVE (198 aa)). Residue 130–183 (PLPRPFVIKPANEGSAVGVHILHEGDNRRTEIARSWSFGGQALVEEYIPGRELT) participates in ATP binding. Mg(2+) contacts are provided by D251, E268, and N270.

Belongs to the D-alanine--D-alanine ligase family. The cofactor is Mg(2+). It depends on Mn(2+) as a cofactor.

The protein resides in the cytoplasm. It catalyses the reaction 2 D-alanine + ATP = D-alanyl-D-alanine + ADP + phosphate + H(+). It functions in the pathway cell wall biogenesis; peptidoglycan biosynthesis. In terms of biological role, cell wall formation. The protein is D-alanine--D-alanine ligase of Granulibacter bethesdensis (strain ATCC BAA-1260 / CGDNIH1).